The chain runs to 214 residues: Epoxide hydrolase EphH (214 aa).

Residue serine 28 is the Nucleophile of the active site. Residues aspartate 156 and histidine 186 each act as charge relay system in the active site.

The protein belongs to the AB hydrolase superfamily.

The catalysed reaction is an epoxide + H2O = an ethanediol. With respect to regulation, inhibited by AUDA, a known epoxide hydrolase inhibitor. Functionally, catalyzes the hydrolysis of epoxide-containing substrates. In vitro, catalyzes the hydrolysis of the synthetic compounds PHOME and styrene oxide. Plays an essential role in subverting phagosomal acidification. Plays a major role in the survival of M.tuberculosis (Mtb) during in vitro acidic stress and protects Mtb in response to phagosomal acidification inside macrophages. Also supports Mtb growth under the nutrient-deprived condition at pH 7.0. This Mycobacterium tuberculosis (strain ATCC 25618 / H37Rv) protein is Epoxide hydrolase EphH.